Here is a 417-residue protein sequence, read N- to C-terminus: Serine hydroxymethyltransferase (417 aa).

Residues Leu121 and 125–127 (GHL) each bind (6S)-5,6,7,8-tetrahydrofolate. Lys229 carries the post-translational modification N6-(pyridoxal phosphate)lysine. 355 to 357 (SPF) is a binding site for (6S)-5,6,7,8-tetrahydrofolate.

The protein belongs to the SHMT family. In terms of assembly, homodimer. It depends on pyridoxal 5'-phosphate as a cofactor.

It localises to the cytoplasm. The enzyme catalyses (6R)-5,10-methylene-5,6,7,8-tetrahydrofolate + glycine + H2O = (6S)-5,6,7,8-tetrahydrofolate + L-serine. Its pathway is one-carbon metabolism; tetrahydrofolate interconversion. It functions in the pathway amino-acid biosynthesis; glycine biosynthesis; glycine from L-serine: step 1/1. Its function is as follows. Catalyzes the reversible interconversion of serine and glycine with tetrahydrofolate (THF) serving as the one-carbon carrier. This reaction serves as the major source of one-carbon groups required for the biosynthesis of purines, thymidylate, methionine, and other important biomolecules. Also exhibits THF-independent aldolase activity toward beta-hydroxyamino acids, producing glycine and aldehydes, via a retro-aldol mechanism. The protein is Serine hydroxymethyltransferase of Stenotrophomonas maltophilia (strain K279a).